A 464-amino-acid chain; its full sequence is Asparagine--tRNA ligase (464 aa).

Belongs to the class-II aminoacyl-tRNA synthetase family. Homodimer.

It localises to the cytoplasm. It catalyses the reaction tRNA(Asn) + L-asparagine + ATP = L-asparaginyl-tRNA(Asn) + AMP + diphosphate + H(+). This chain is Asparagine--tRNA ligase, found in Cytophaga hutchinsonii (strain ATCC 33406 / DSM 1761 / CIP 103989 / NBRC 15051 / NCIMB 9469 / D465).